The primary structure comprises 573 residues: MARILITSALPYINGIKHLGNLVGSQLPADLYARYNRGRGHEVMFLCATDEHGTPAELAAAKAGKPVADYCAEMHAVQADIAKRFGLSFDHYGRSSSPQNHALTQHFAGKLEEAGLITEVSEKQVYSNADGRFLPDRYIEGTCPNCGFEKARGDQCEECTKQLDPTDLINPRSAISGSTDLEVRETKHLFLRQSAMRDQLDQWIDSKTDWPVLTTSIAKKWLHDGDGLQDRGITRDLDWGIAVKKGDADWPGMEGKVFYVWFDAPIEYIAAAGEWAEAHGKTDADWERWWRTDKGADDVKYVQFMGKDNVPFHTLSFPATLLGSGEPWKMVDHLKSFNYLNYDGGQFSTSQGRGVFMDQALEILPADYWRWWLLSHAPESSDSEFTWENFQQSVNKDLADVLGNFVSRITKFCRSKFGEEVPDGGTWGEQEQTLIEELSTRIGAFERHMEAMEVRKSAQELRAIWVAGNEYLQSAAPWSVFKEDPERAAGQVRLGLNLIRLYAVLSAPFIPDASDRLFAALGTEDRSWPEDVAAALAALPAGHAFTVPEVLFAKITDEQREEWQERFAGGRSA.

Residues 11 to 21 (PYINGIKHLGN) carry the 'HIGH' region motif. Residues cysteine 143, cysteine 146, cysteine 156, and cysteine 159 each contribute to the Zn(2+) site. Residues 346 to 350 (QFSTS) carry the 'KMSKS' region motif. An ATP-binding site is contributed by threonine 349.

This sequence belongs to the class-I aminoacyl-tRNA synthetase family. MetG type 1 subfamily. Monomer. It depends on Zn(2+) as a cofactor.

The protein resides in the cytoplasm. It catalyses the reaction tRNA(Met) + L-methionine + ATP = L-methionyl-tRNA(Met) + AMP + diphosphate. Functionally, is required not only for elongation of protein synthesis but also for the initiation of all mRNA translation through initiator tRNA(fMet) aminoacylation. The sequence is that of Methionine--tRNA ligase from Ruegeria sp. (strain TM1040) (Silicibacter sp.).